A 945-amino-acid polypeptide reads, in one-letter code: Isoleucine--tRNA ligase (945 aa).

Positions 67 to 77 (PYANGQIHLGH) match the 'HIGH' region motif. Residue Glu-573 coordinates L-isoleucyl-5'-AMP. Positions 614 to 618 (KMSKS) match the 'KMSKS' region motif. Residue Lys-617 participates in ATP binding. Positions 908, 911, 928, and 931 each coordinate Zn(2+).

This sequence belongs to the class-I aminoacyl-tRNA synthetase family. IleS type 1 subfamily. As to quaternary structure, monomer. Zn(2+) serves as cofactor.

Its subcellular location is the cytoplasm. It carries out the reaction tRNA(Ile) + L-isoleucine + ATP = L-isoleucyl-tRNA(Ile) + AMP + diphosphate. In terms of biological role, catalyzes the attachment of isoleucine to tRNA(Ile). As IleRS can inadvertently accommodate and process structurally similar amino acids such as valine, to avoid such errors it has two additional distinct tRNA(Ile)-dependent editing activities. One activity is designated as 'pretransfer' editing and involves the hydrolysis of activated Val-AMP. The other activity is designated 'posttransfer' editing and involves deacylation of mischarged Val-tRNA(Ile). This is Isoleucine--tRNA ligase from Acinetobacter baylyi (strain ATCC 33305 / BD413 / ADP1).